We begin with the raw amino-acid sequence, 151 residues long: Small ribosomal subunit protein uS19 (151 aa).

Residues 1–23 (MVVNKQGSVKSIKRKARKSRKVT) form a disordered region. Residues 11-23 (SIKRKARKSRKVT) are compositionally biased toward basic residues.

It belongs to the universal ribosomal protein uS19 family.

Protein S19 forms a complex with S13 that binds strongly to the 16S ribosomal RNA. This Thermoplasma volcanium (strain ATCC 51530 / DSM 4299 / JCM 9571 / NBRC 15438 / GSS1) protein is Small ribosomal subunit protein uS19 (rps19).